A 455-amino-acid polypeptide reads, in one-letter code: Exodeoxyribonuclease 7 large subunit (455 aa).

This sequence belongs to the XseA family. Heterooligomer composed of large and small subunits.

Its subcellular location is the cytoplasm. It carries out the reaction Exonucleolytic cleavage in either 5'- to 3'- or 3'- to 5'-direction to yield nucleoside 5'-phosphates.. Bidirectionally degrades single-stranded DNA into large acid-insoluble oligonucleotides, which are then degraded further into small acid-soluble oligonucleotides. The sequence is that of Exodeoxyribonuclease 7 large subunit from Escherichia fergusonii (strain ATCC 35469 / DSM 13698 / CCUG 18766 / IAM 14443 / JCM 21226 / LMG 7866 / NBRC 102419 / NCTC 12128 / CDC 0568-73).